A 431-amino-acid polypeptide reads, in one-letter code: Serine hydroxymethyltransferase (431 aa).

Residues L128 and G132–L134 each bind (6S)-5,6,7,8-tetrahydrofolate. An N6-(pyridoxal phosphate)lysine modification is found at K237. E253 serves as a coordination point for (6S)-5,6,7,8-tetrahydrofolate.

This sequence belongs to the SHMT family. As to quaternary structure, homodimer. Pyridoxal 5'-phosphate serves as cofactor.

The protein localises to the cytoplasm. It catalyses the reaction (6R)-5,10-methylene-5,6,7,8-tetrahydrofolate + glycine + H2O = (6S)-5,6,7,8-tetrahydrofolate + L-serine. Its pathway is one-carbon metabolism; tetrahydrofolate interconversion. It functions in the pathway amino-acid biosynthesis; glycine biosynthesis; glycine from L-serine: step 1/1. Catalyzes the reversible interconversion of serine and glycine with tetrahydrofolate (THF) serving as the one-carbon carrier. This reaction serves as the major source of one-carbon groups required for the biosynthesis of purines, thymidylate, methionine, and other important biomolecules. Also exhibits THF-independent aldolase activity toward beta-hydroxyamino acids, producing glycine and aldehydes, via a retro-aldol mechanism. This Cereibacter sphaeroides (strain ATCC 17023 / DSM 158 / JCM 6121 / CCUG 31486 / LMG 2827 / NBRC 12203 / NCIMB 8253 / ATH 2.4.1.) (Rhodobacter sphaeroides) protein is Serine hydroxymethyltransferase.